Consider the following 114-residue polypeptide: BolA-like protein DDB_G0274169 (114 aa).

The span at 88–98 shows a compositional bias: polar residues; the sequence is TQWKKNNQTKI. The segment at 88–114 is disordered; sequence TQWKKNNQTKINVDDDKSPSCKGGFGK.

The protein belongs to the BolA/IbaG family.

The protein is BolA-like protein DDB_G0274169 of Dictyostelium discoideum (Social amoeba).